Consider the following 784-residue polypeptide: E3 UFM1-protein ligase 1 homolog (784 aa).

Residues 405-480 (SVSTQELEDD…RGGGAGNKKA (76 aa)) are disordered. Basic residues predominate over residues 444–454 (KSTKKHQRGKA).

Belongs to the UFL1 family.

E3 UFM1-protein ligase that mediates ufmylation of target proteins. This is E3 UFM1-protein ligase 1 homolog from Drosophila yakuba (Fruit fly).